The primary structure comprises 110 residues: Putative zinc finger protein ORF110 (110 aa).

Residues 3–26 (YVCTACKLKFHTFEEFKIHVHLFH) form a C2H2-type zinc finger.

In Acidianus filamentous virus 1 (isolate United States/Yellowstone) (AFV-1), this protein is Putative zinc finger protein ORF110.